Here is a 374-residue protein sequence, read N- to C-terminus: tRNA-specific 2-thiouridylase MnmA (374 aa).

ATP-binding positions include 17-24 (GMSGGVDS) and Met43. Residues 103–105 (NPD) are interaction with target base in tRNA. The active-site Nucleophile is Cys108. A disulfide bond links Cys108 and Cys204. Residue Gly132 coordinates ATP. Residues 154–156 (KDQ) are interaction with tRNA. Cys204 (cysteine persulfide intermediate) is an active-site residue. Residues 316–317 (RY) form an interaction with tRNA region.

Belongs to the MnmA/TRMU family.

The protein resides in the cytoplasm. The catalysed reaction is S-sulfanyl-L-cysteinyl-[protein] + uridine(34) in tRNA + AH2 + ATP = 2-thiouridine(34) in tRNA + L-cysteinyl-[protein] + A + AMP + diphosphate + H(+). Catalyzes the 2-thiolation of uridine at the wobble position (U34) of tRNA, leading to the formation of s(2)U34. This is tRNA-specific 2-thiouridylase MnmA from Pseudomonas fluorescens (strain Pf0-1).